A 161-amino-acid polypeptide reads, in one-letter code: 2-C-methyl-D-erythritol 2,4-cyclodiphosphate synthase (161 aa).

A divalent metal cation contacts are provided by D8 and H10. Residues 8–10 and 34–35 each bind 4-CDP-2-C-methyl-D-erythritol 2-phosphate; these read DLH and HS. H42 lines the a divalent metal cation pocket. 4-CDP-2-C-methyl-D-erythritol 2-phosphate is bound by residues 56 to 58, 100 to 106, and R142; these read DIG and AEYPKML.

It belongs to the IspF family. In terms of assembly, homotrimer. A divalent metal cation is required as a cofactor.

It carries out the reaction 4-CDP-2-C-methyl-D-erythritol 2-phosphate = 2-C-methyl-D-erythritol 2,4-cyclic diphosphate + CMP. The protein operates within isoprenoid biosynthesis; isopentenyl diphosphate biosynthesis via DXP pathway; isopentenyl diphosphate from 1-deoxy-D-xylulose 5-phosphate: step 4/6. In terms of biological role, involved in the biosynthesis of isopentenyl diphosphate (IPP) and dimethylallyl diphosphate (DMAPP), two major building blocks of isoprenoid compounds. Catalyzes the conversion of 4-diphosphocytidyl-2-C-methyl-D-erythritol 2-phosphate (CDP-ME2P) to 2-C-methyl-D-erythritol 2,4-cyclodiphosphate (ME-CPP) with a corresponding release of cytidine 5-monophosphate (CMP). This is 2-C-methyl-D-erythritol 2,4-cyclodiphosphate synthase from Buchnera aphidicola subsp. Acyrthosiphon pisum (strain 5A).